Reading from the N-terminus, the 504-residue chain is Deoxyguanosinetriphosphate triphosphohydrolase (504 aa).

Residues 66-273 form the HD domain; the sequence is RLTHSLEVQQ…MEAADDISYC (208 aa).

It belongs to the dGTPase family. Type 1 subfamily. In terms of assembly, homotetramer. The cofactor is Mg(2+).

It catalyses the reaction dGTP + H2O = 2'-deoxyguanosine + triphosphate + H(+). Its function is as follows. dGTPase preferentially hydrolyzes dGTP over the other canonical NTPs. This chain is Deoxyguanosinetriphosphate triphosphohydrolase, found in Cronobacter sakazakii (strain ATCC BAA-894) (Enterobacter sakazakii).